The following is a 266-amino-acid chain: Tryptophan synthase alpha chain (266 aa).

Residues E52 and D63 each act as proton acceptor in the active site.

The protein belongs to the TrpA family. As to quaternary structure, tetramer of two alpha and two beta chains.

The catalysed reaction is (1S,2R)-1-C-(indol-3-yl)glycerol 3-phosphate + L-serine = D-glyceraldehyde 3-phosphate + L-tryptophan + H2O. It functions in the pathway amino-acid biosynthesis; L-tryptophan biosynthesis; L-tryptophan from chorismate: step 5/5. The alpha subunit is responsible for the aldol cleavage of indoleglycerol phosphate to indole and glyceraldehyde 3-phosphate. The chain is Tryptophan synthase alpha chain from Nocardia farcinica (strain IFM 10152).